The chain runs to 189 residues: 3-isopropylmalate dehydratase small subunit (189 aa).

The protein belongs to the LeuD family. LeuD type 1 subfamily. As to quaternary structure, heterodimer of LeuC and LeuD.

The catalysed reaction is (2R,3S)-3-isopropylmalate = (2S)-2-isopropylmalate. Its pathway is amino-acid biosynthesis; L-leucine biosynthesis; L-leucine from 3-methyl-2-oxobutanoate: step 2/4. Catalyzes the isomerization between 2-isopropylmalate and 3-isopropylmalate, via the formation of 2-isopropylmaleate. The chain is 3-isopropylmalate dehydratase small subunit from Francisella philomiragia subsp. philomiragia (strain ATCC 25017 / CCUG 19701 / FSC 153 / O#319-036).